Reading from the N-terminus, the 408-residue chain is 26S proteasome regulatory subunit 6B homolog (408 aa).

Ala2 is modified (N-acetylalanine). Position 16 is a phosphoserine (Ser16). Residues 28-75 (EDLYGRLKSLERQLEFTDIQEEYVKDEQKNLKRELLRAQEEVKRIQSV) adopt a coiled-coil conformation. 196–203 (GPPGTGKT) is an ATP binding site.

The protein belongs to the AAA ATPase family. Component of the 19S regulatory particle (RP/PA700) base subcomplex of the 26S proteasome. The 26S proteasome is composed of a core protease (CP), known as the 20S proteasome, capped at one or both ends by the 19S regulatory particle (RP/PA700). The RP/PA700 complex is composed of at least 17 different subunits in two subcomplexes, the base and the lid, which form the portions proximal and distal to the 20S proteolytic core, respectively. As to expression, expressed in dark-grown etiolated seedlings, roots, leaves, stems and flowers.

It localises to the cytoplasm. It is found in the nucleus. The 26S proteasome is involved in the ATP-dependent degradation of ubiquitinated proteins. The regulatory (or ATPase) complex confers ATP dependency and substrate specificity to the 26S complex. This chain is 26S proteasome regulatory subunit 6B homolog (RPT3), found in Arabidopsis thaliana (Mouse-ear cress).